The sequence spans 382 residues: MLQEAKVSTHTSNPLSQSVPQYGHSFDEATRVERLDSAPESLASVASTKLKDTTVWYRLAIQSEWCSTPQVPHGGFLASLLLSALLEHQQSQQHPDPYTLSYDFLKVLSPGEAFISVTSLGKVSGSFTSIAAELYQSRKEKVLLGVSVRGSFVNLSKQQGKSVLPLHYGAVSKLEEVPVPHPRSWYLPPSQAMISRQLDLLVKLETQRRPFSDYFVRFHPDDVDTPQQEDYSEEHASADLQSSPHYCKGSRILPLRSSHSRRIDAKSIPMFGDFRRPAYENVIKQDPCHPHDVPTRKFAFPTLQYTIRFLAKVPHDTEWLHTQWRETVVDGRIISDVYITTEQGAEPVAICQLDSLMFDMQWALSTMPSAEKSKKSPEASQL.

The segment covering 1–20 (MLQEAKVSTHTSNPLSQSVP) has biased composition (polar residues). A disordered region spans residues 1 to 22 (MLQEAKVSTHTSNPLSQSVPQY).

It functions in the pathway secondary metabolite biosynthesis. In terms of biological role, part of the gene cluster that mediates the biosynthesis of the glycolipid biosurfactant ustilagic acid (UA). UA is a secreted cellobiose glycolipid that is toxic for many microorganisms and confers biocontrol activity to U.maydis. UA consists of 15,16-dihydroxypalmitic or 2,15,16-trihydroxypalmitic acid, which is O-glycosidically linked to cellobiose at its terminal hydroxyl group. In addition, the cellobiose moiety is acetylated and acylated with a short-chain hydroxy fatty acid. UA biosynthesis starts with omega-hydroxylation of palmitic acid catalyzed by the cytochrome P450 monooxygenase cyp1. Terminal hydroxylation of palmitic acid precedes subterminal hydroxylation catalyzed by the cytochrome P450 monooxygenase cyp2. Sequential glucosylation of the hydroxy fatty acid is probably catalyzed by the glycosyltransferase ugt1. The cellobiose lipid is further decorated by acetylation of the proximal glucose residue and by acylation with a short-chain beta-hydroxy fatty acid at the distal glucose residue. The acyltransferase uat1 may be a good candidate for catalyzing either acetylation or acylation of the cellobiose lipid. The fatty acid synthase fas2 may be involved in synthesis of the carbon backbone of the short-chain beta-hydroxy fatty acid esterified to the cellobiose disaccharide. The secreted UA consists of a mixture of both alpha-hydroxylated and non-hydroxylated glycolipids; therefore, alpha-hydroxylation of the long-chain fatty, catalyzed by the fatty acid hydroxylase ahd1, occurs late in UA biosynthesis and may be the last step before secretion. In Mycosarcoma maydis (Corn smut fungus), this protein is Ustilagic acid biosynthesis cluster protein orf2.